A 299-amino-acid chain; its full sequence is Recombination-associated protein RdgC (299 aa).

The protein belongs to the RdgC family.

The protein resides in the cytoplasm. It is found in the nucleoid. Its function is as follows. May be involved in recombination. This Bordetella parapertussis (strain 12822 / ATCC BAA-587 / NCTC 13253) protein is Recombination-associated protein RdgC.